We begin with the raw amino-acid sequence, 1062 residues long: Inversin (1062 aa).

ANK repeat units lie at residues 13-42, 47-76, 80-110, 113-144, 148-177, 181-213, 220-250, 254-283, 288-317, 321-350, 356-385, 389-418, 422-451, 455-484, 488-517, and 523-553; these read SLASQVHAAAVNGDKGALQRLIVGNSALRD, FGRTPLMYCVLADRVDCADALLKAGADVNK, SRRTALHLAAQKGNYRFMKLLLTRRANWMQK, EEMTPLHLSTRHRSPKCLALLLKFMAPGEVDT, NKQTALHWSAYYNNPEHAKLLIKHDSNIGI, EGKIPLHWAANHKDPSAVHTVRCILDAAPTESL, EGRTPLHFAVADGNLTVVDVLTSYESCNITS, LFRTPLHWAALLGHAQIVHLLLERNKSGTI, QGATPLHYAAQSNFAETVKVFLQHPSVKDD, EGRTSFMWAAGKGNDDVLRTMLSLKSDIDI, YGGTALHAAALSGHVSTVKLLLDNDAQVDA, MKHTPLFRACEMGHRDVIQTLIKGGARVDL, DGHSLLHWAALGGNADVCQILIENKINPNV, AGRTPLQCAAYGGYINCMAVLMENNADPNI, EGRTALHWSCNNGYLDAIKLLLDFAAFPNQ, and ERYTPLDYALLGERHEVIQFMLEHGALSIAA. Asparagine 75 carries the 3-hydroxyasparagine modification. Residues 490 to 498 carry the D-box 1 motif; that stretch reads RTALHWSCN. An IQ 1 domain is found at 555-584; that stretch reads QDIAAFKIQAVYKGYKVRKAFRDRKNLLMK. Over residues 589–608 the composition is skewed to basic and acidic residues; that stretch reads RKDAAAKKREEENKRKEAEQ. The disordered stretch occupies residues 589–849; it reads RKDAAAKKRE…QDKLIGGVSS (261 aa). 2 stretches are compositionally biased toward polar residues: residues 636–658 and 676–689; these read QNEGSKQDATPSKQPPASHTVQS and QGDSSIDLQGTASR. Basic and acidic residues predominate over residues 690–700; sequence KPSETPIEHCR. Over residues 713–724 the composition is skewed to polar residues; sequence GGNSSKNQGTSS. 2 stretches are compositionally biased toward basic and acidic residues: residues 725–741 and 775–788; these read VEKRRGETNGKHRRCEE and DHPRKPNKRQDRAA. Residues 907–915 carry the D-box 2 motif; the sequence is RKELFRRKN. Residues 914-943 form the IQ 2 domain; sequence KNKAAAVIQRAWRSYQLRKHLSRLLHLKQL. The interval 1042–1062 is disordered; that stretch reads RSKKFSYNLQPSSQSKNKPKL. Residues 1046-1062 show a composition bias toward polar residues; the sequence is FSYNLQPSSQSKNKPKL.

Interacts with microtubules. Interacts with NPHP1. Interacts with DVL1, PRICKLE (PRICKLE1 or PRICKLE2) and Strabismus (VANGL1 or VANGL2). Binds calmodulin via its IQ domains. Interacts with APC2. Interacts with alpha-, beta-, and gamma-catenin. Interacts with N-cadherin (CDH2). Interacts with NPHP3. Interacts with IQCB1; the interaction likely requires additional interactors. Component of a complex containing at least ANKS6, INVS, NEK8 and NPHP3. ANKS6 may organize complex assembly by linking INVS and NPHP3 to NEK8 and INVS may target the complex to the proximal ciliary axoneme. May be ubiquitinated via its interaction with APC2. Post-translationally, hydroxylated at Asn-75, most probably by HIF1AN. In terms of tissue distribution, strongly expressed in the primary cilia of renal cells, especially in the varicosities, swellings observed in the cilia. Localizes in the node monocilia and in other 9+0 monocilia, including those of kidney epithelial cells and the pituitary gland, but it does not localize to 9+2 cilia (at protein level). In adult, it is expressed at high level in liver and kidney. Weakly or not expressed in other tissues.

Its subcellular location is the cytoplasm. It localises to the cytoskeleton. The protein localises to the membrane. It is found in the nucleus. The protein resides in the perinuclear region. Its subcellular location is the spindle. Functionally, required for normal renal development and establishment of left-right axis. Probably acts as a molecular switch between different Wnt signaling pathways. Inhibits the canonical Wnt pathway by targeting cytoplasmic disheveled (DVL1) for degradation by the ubiquitin-proteasome. This suggests that it is required in renal development to oppose the repression of terminal differentiation of tubular epithelial cells by Wnt signaling. Involved in the organization of apical junctions in kidney cells together with NPHP1, NPHP4 and RPGRIP1L/NPHP8. Does not seem to be strictly required for ciliogenesis. This Mus musculus (Mouse) protein is Inversin (Invs).